Here is a 117-residue protein sequence, read N- to C-terminus: Immunoglobulin heavy variable 3-30-3 (117 aa).

The first 19 residues, 1–19, serve as a signal peptide directing secretion; sequence MEFGLSWVFLVALLRGVQC. A Pyrrolidone carboxylic acid modification is found at Q20. The tract at residues 20-44 is framework-1; sequence QVQLVESGGGVVQPGRSLRLSCAAS. Residues 20–117 form the Ig-like domain; the sequence is QVQLVESGGG…EDTAVYYCAR (98 aa). C41 and C115 are oxidised to a cystine. Residues 45–52 form a complementarity-determining-1 region; it reads GFTFSSYA. The segment at 53 to 69 is framework-2; that stretch reads MHWVRQAPGKGLEWVAV. The interval 70–77 is complementarity-determining-2; the sequence is ISYDGSNK. The interval 78–115 is framework-3; it reads YYADSVKGRFTISRDNSKNTLYLQMNSLRAEDTAVYYC. The interval 116-117 is complementarity-determining-3; sequence AR.

Immunoglobulins are composed of two identical heavy chains and two identical light chains; disulfide-linked.

The protein resides in the secreted. Its subcellular location is the cell membrane. V region of the variable domain of immunoglobulin heavy chains that participates in the antigen recognition. Immunoglobulins, also known as antibodies, are membrane-bound or secreted glycoproteins produced by B lymphocytes. In the recognition phase of humoral immunity, the membrane-bound immunoglobulins serve as receptors which, upon binding of a specific antigen, trigger the clonal expansion and differentiation of B lymphocytes into immunoglobulins-secreting plasma cells. Secreted immunoglobulins mediate the effector phase of humoral immunity, which results in the elimination of bound antigens. The antigen binding site is formed by the variable domain of one heavy chain, together with that of its associated light chain. Thus, each immunoglobulin has two antigen binding sites with remarkable affinity for a particular antigen. The variable domains are assembled by a process called V-(D)-J rearrangement and can then be subjected to somatic hypermutations which, after exposure to antigen and selection, allow affinity maturation for a particular antigen. This Homo sapiens (Human) protein is Immunoglobulin heavy variable 3-30-3.